The primary structure comprises 253 residues: MCALVPSFFTNFGWPSTNQYESYYGAGDNLNNGTFLELTVPQTYEVTHHQNSLGVSVSSEGNEIDNNPVVVKKLNHNASERDRRKKINTLFSSLRSCLPASDQSKKLSIPETVSKSLKYIPELQQQVKRLIQKKEEILVRVSGQRDFELYDKQQPKAVASYLSTVSATRLGDNEVMVQVSSSKIHNFSISNVLGGIEEDGFVLVDVSSSRSQGERLFYTLHLQVENMDDYKINCEELSERMLYLYEKCENSFN.

Residues 71–123 (VKKLNHNASERDRRKKINTLFSSLRSCLPASDQSKKLSIPETVSKSLKYIPEL) enclose the bHLH domain.

In terms of assembly, homodimer. In terms of tissue distribution, roots.

Its subcellular location is the nucleus. This chain is Transcription factor ORG2 (ORG2), found in Arabidopsis thaliana (Mouse-ear cress).